Reading from the N-terminus, the 220-residue chain is N-(5'-phosphoribosyl)anthranilate isomerase (220 aa).

This sequence belongs to the TrpF family.

It carries out the reaction N-(5-phospho-beta-D-ribosyl)anthranilate = 1-(2-carboxyphenylamino)-1-deoxy-D-ribulose 5-phosphate. The protein operates within amino-acid biosynthesis; L-tryptophan biosynthesis; L-tryptophan from chorismate: step 3/5. The chain is N-(5'-phosphoribosyl)anthranilate isomerase from Bordetella petrii (strain ATCC BAA-461 / DSM 12804 / CCUG 43448).